A 209-amino-acid chain; its full sequence is Probable GTP-binding protein EngB (209 aa).

The EngB-type G domain maps to 27–201 (SGVEIAFAGR…ATKLDSWFAE (175 aa)). Residues 35 to 42 (GRSNAGKS), 62 to 66 (GRTQL), 80 to 83 (DLPG), 147 to 150 (TKAD), and 180 to 182 (YSA) contribute to the GTP site. S42 and T64 together coordinate Mg(2+).

It belongs to the TRAFAC class TrmE-Era-EngA-EngB-Septin-like GTPase superfamily. EngB GTPase family. Mg(2+) is required as a cofactor.

Its function is as follows. Necessary for normal cell division and for the maintenance of normal septation. This is Probable GTP-binding protein EngB from Glaesserella parasuis serovar 5 (strain SH0165) (Haemophilus parasuis).